The primary structure comprises 597 residues: DDB1- and CUL4-associated factor 8 (597 aa).

Residues 1–24 are compositionally biased toward polar residues; sequence MSSKGSSTDGRTDLANGSLSSSPE. Residues 1 to 147 are disordered; sequence MSSKGSSTDG…DWVSSETSAL (147 aa). Ser21 and Ser22 each carry phosphoserine. The Nuclear export signal signature appears at 39–50; it reads IEVEASDLSLSL. Positions 65–99 are enriched in basic and acidic residues; it reads RGTDTESSGEDKDSDSMEDTGHYSINDENRVHDRS. Position 99 is a phosphoserine (Ser99). The span at 100-112 shows a compositional bias: acidic residues; that stretch reads EEEEEEEEEEEEE. Residues 114–122 carry the Nuclear localization signal motif; the sequence is PRRRVQRKR. Over residues 124–137 the composition is skewed to basic and acidic residues; that stretch reads NRDQDSSDDERALE. Residues Ser129 and Ser130 each carry the phosphoserine modification. WD repeat units follow at residues 191–230, 234–275, 281–321, 329–369, 385–424, 432–472, and 476–515; these read GHTG…PVLD, GHKS…CCKN, QHKG…PASK, EKKV…ENEN, ESKA…GAQY, RNNA…IIQF, and DKGG…STEL. The residue at position 204 (Arg204) is an Omega-N-methylarginine; by PRMT1. The segment at 558–597 is disordered; it reads HRRWREPGVGATDADSDESPSSSDTSDEEEGPDRVQCMPS.

The protein belongs to the WD repeat DCAF8 family. Interacts with DDB1, CUL4A and CUL4B. Interacts with KPNA1, KPNB1 and XPO1.

It is found in the nucleus. The protein resides in the cytoplasm. It functions in the pathway protein modification; protein ubiquitination. In terms of biological role, may function as a substrate receptor for CUL4-DDB1 E3 ubiquitin-protein ligase complex. The polypeptide is DDB1- and CUL4-associated factor 8 (DCAF8) (Homo sapiens (Human)).